The chain runs to 534 residues: MTSAVPLLSRWCRATLAARKKLTHKAEPAFCKGIWWQCVRSLAALSNGPETGDMRGYLTSNYKEVKRSINEELVPSVSSSLLNPDAIFANNEMSLEDIEVYGFDYDYTLAFYSKDLHTLIFNTARDLLINEHRYPKEIRSYEYDPNFAIRGLHYDVHKALLMKIDSFHYIQLGTVYRGLNVVPDFYGKSSEGNTLKQFMDIFSLPEMTLLSCVNEYFLKNNIDYEPVHLYKDVKEAIRDVHVKGILYRAVEADIERYICYGERTQAVLSKLANLGKKMFLITNSPSSFVNKGMNFIVGKDWRDLFDVVIVQADKPNFFNDKRRPFRKVAERGILLWDKIHHLEKGQTYKQGNLFEFLKLTGWRGSKVLYFGDHIYSDLADLTLKHGWRTGAIIPELKSEIEIMNTSHYITTVTWLQGLTGLLERMQVYRDAESQMVLQDWIKERQEMRDLARKMFNRQFGSIFRTDHNPTYFLRRLSRFADIYMESLSCLLNYDLHHTFYPKRTPLQHELPVCSEQQNTGTFRIPLGKEMAQIK.

Catalysis depends on Asp104, which acts as the Nucleophile. Residues Asp104 and Asp106 each coordinate Mg(2+). The Proton donor role is filled by Asp106. 234-242 serves as a coordination point for substrate; sequence KEAIRDVHV. Asp372 serves as a coordination point for Mg(2+).

It belongs to the 5'(3')-deoxyribonucleotidase family. Mg(2+) serves as cofactor.

The sequence is that of 5'-nucleotidase domain-containing protein 3 (nt5dc3) from Xenopus tropicalis (Western clawed frog).